Consider the following 337-residue polypeptide: Dimethyladenosine transferase 1, mitochondrial (337 aa).

Residues 1-84 (MSQVTARVLN…RSILRRQPQR (84 aa)) constitute a mitochondrion transit peptide. Residues 38-41 (QNFL), Asn39, Leu41, Gly67, Glu89, Asp118, and Asn140 contribute to the S-adenosyl-L-methionine site.

The protein belongs to the class I-like SAM-binding methyltransferase superfamily. rRNA adenine N(6)-methyltransferase family. KsgA subfamily.

It localises to the mitochondrion. Functionally, probable S-adenosyl-L-methionine-dependent methyltransferase which specifically dimethylates mitochondrial 12S rRNA at the conserved stem loop. The polypeptide is Dimethyladenosine transferase 1, mitochondrial (mtTFB1) (Drosophila pseudoobscura pseudoobscura (Fruit fly)).